The primary structure comprises 128 residues: 3-aminoacrylate deaminase RutC (128 aa).

It belongs to the RutC family.

The enzyme catalyses (Z)-3-aminoacrylate + H2O + H(+) = 3-oxopropanoate + NH4(+). Functionally, involved in pyrimidine catabolism. Catalyzes the deamination of 3-aminoacrylate to malonic semialdehyde, a reaction that can also occur spontaneously. RutC may facilitate the reaction and modulate the metabolic fitness, rather than catalyzing essential functions. This Enterobacter cloacae subsp. cloacae (strain ATCC 13047 / DSM 30054 / NBRC 13535 / NCTC 10005 / WDCM 00083 / NCDC 279-56) protein is 3-aminoacrylate deaminase RutC.